Consider the following 479-residue polypeptide: Long-chain acyl-protein thioester reductase (479 aa).

Belongs to the LuxC family.

It catalyses the reaction a long-chain fatty aldehyde + NADP(+) + CoA = a long-chain fatty acyl-CoA + NADPH + H(+). It participates in lipid metabolism; fatty acid reduction for biolumincescence. Its function is as follows. LuxC is the fatty acid reductase enzyme responsible for synthesis of the aldehyde substrate for the luminescent reaction catalyzed by luciferase. The protein is Long-chain acyl-protein thioester reductase (luxC) of Aliivibrio fischeri (Vibrio fischeri).